Reading from the N-terminus, the 1382-residue chain is MKAPAVLAPGVLVLLFTLVRKSHGECEEALAKSKMNVNMKYQLPNFTADTPIQNVVLHEHHIFLGAINNIYVLNDKDLQKVAEYKTGPVLEHPDCLPCQDCSSKANLSGSVWKDNINMALLVDTYYDDQLITCGSVNRGTCQRHVLPPDNPADIHSKVHCMYSPQADEEPSKCPDCVVSALGTKVLLTEKDRFINFFVGNTVNSSYLPDHSLHSISVRRLKETQDGFKFLTDQSYIDVLPEFRDSYPIKYVHAFKHNQFIYFLTVQRETLESQTFHTRIIRFCSVDSGLHSYMEMPLECILTEKRRKRSAREEVFNILQAAYVSKPGAYLAKQIGALPDDDILYGVFAQSKLDSAEPMNRSAVCAFPIKYVNDFFNKIVNKNNVRCLQHFYGPNHEHCFNRTLLRNSSGCEVRRDEYRTEFTTALQRVDLFTGQFNQVLLTSISTFIKGNLTIANLGTSEGRFMQVVVSRSGLTTPHVNFRLDSHAVSPEVILEHPLNQNGYTLVITGKKITKIPLDGLGCDHFQSCSQCLSAPSFVQCGWCHNKCARAEECPNGMWTQEICLPTIYEVFPTSAPLEGGTTLTVCGWDFGFRRNNKFDLKKTRVLIGNDSCTLTLSESTTNTLKCTVGPAMNKHFNLSIIISNGRGTARYRTFSYVEPVITSISPSYGPKAGGTLVTLTGKYLNSGNSRHISIGGKTCTLKSVSDSVLECYTPAQSISTDFPVKLKIDLANREAYSFSYQEDPTVYEIHPNKSFISGGSTITGIGKNLNSVSVPRMVINVQEAGRNFTVACQHRSNSEIICCTTPSLQQLNLQLPLKTKAFFMLDGIHSNYFDLIYVHNPVFKPFKKPVMISMGNENVLEIKGDYIDPEAVKGEVLKVGNKSCENIHLQSEAVLCTVPNDLLKLNSELNIEWKQAVSSTVLGKVIVQPDQNFTGLIVGVVSISIILLLLLGLFLWLKKRKQIKDLGSELVRYDARVHTPHLDRLVSARSVSPTTEMVSNESVDYRATFPEDQFPNSSQNGSCRQVQYPLTDMSPILTNGDSDSSIPLLQNNVHIDLSALNPELVQAVQHVVIGPSSLIVHFNEVIGRGHFGCVYHGTLLDNGDKKIHCAVKSLNRITDIGEVSQFLTEGIIMKDFSHPNVLSLLGICLRSEGSPLVVLPYMKHGDLRNFIRNETHNPTVKDLIGFGLQVAKGMKYLASKKFVHRDLAARNCMLDEKFTVKVADFGLARDVYDKEYYSVHNKTGAKLPVKWMALESLQTQKFTTKSDVWSFGVLLWELMTRGAPPYPDVNTFDITVYLLQGRRLLQPEYCPDPLYEVMLKCWHPKAEMRPSFSELVSRISAIFSTFIGEHYVHVNTTYVNVKCVAPYPSLLSSQDSVDDEVDT.

The N-terminal stretch at methionine 1–glycine 24 is a signal peptide. Over glutamate 25–leucine 935 the chain is Extracellular. One can recognise a Sema domain in the interval glutamate 27 to leucine 516. Asparagine 45 carries N-linked (GlcNAc...) asparagine glycosylation. Cystine bridges form between cysteine 95–cysteine 101, cysteine 98–cysteine 160, cysteine 133–cysteine 141, and cysteine 173–cysteine 176. N-linked (GlcNAc...) asparagine glycosylation occurs at asparagine 106. N-linked (GlcNAc...) asparagine glycans are attached at residues asparagine 203 and asparagine 359. 2 cysteine pairs are disulfide-bonded: cysteine 299–cysteine 364 and cysteine 386–cysteine 398. N-linked (GlcNAc...) asparagine glycosylation is found at asparagine 400, asparagine 406, and asparagine 450. Disulfide bonds link cysteine 521–cysteine 539, cysteine 527–cysteine 562, cysteine 530–cysteine 546, and cysteine 542–cysteine 552. IPT/TIG domains follow at residues proline 564–valine 656, proline 658–glutamine 740, and proline 743–valine 837. O-linked (Man) threonine glycosylation is present at threonine 583. N-linked (GlcNAc...) asparagine glycans are attached at residues asparagine 608 and asparagine 636. A glycan (O-linked (Man) threonine) is linked at threonine 677. An N-linked (GlcNAc...) asparagine glycan is attached at asparagine 751. Threonine 762 is a glycosylation site (O-linked (Man) threonine). Asparagine 786, asparagine 880, and asparagine 931 each carry an N-linked (GlcNAc...) asparagine glycan. The helical transmembrane segment at isoleucine 936–leucine 956 threads the bilayer. At lysine 957 to threonine 1382 the chain is on the cytoplasmic side. The residue at position 967 (serine 967) is a Phosphoserine. Threonine 978 is subject to Phosphothreonine. Residues serine 991, serine 998, and serine 1001 each carry the phosphoserine modification. Tyrosine 1004 carries the phosphotyrosine modification. The Protein kinase domain occupies valine 1079–isoleucine 1346. Residues isoleucine 1085–valine 1093 and lysine 1111 each bind ATP. Aspartate 1205 serves as the catalytic Proton acceptor. An interaction with RANBP9 region spans residues leucine 1213–threonine 1382. Tyrosine 1231 is subject to Phosphotyrosine. Residues tyrosine 1235 and tyrosine 1236 each carry the phosphotyrosine; by autocatalysis modification. Threonine 1290 carries the post-translational modification Phosphothreonine. The tract at residues tryptophan 1321–valine 1360 is interaction with MUC20. Tyrosine 1350 and tyrosine 1357 each carry phosphotyrosine; by autocatalysis. Position 1366 is a phosphotyrosine (tyrosine 1366).

Belongs to the protein kinase superfamily. Tyr protein kinase family. As to quaternary structure, heterodimer made of an alpha chain (50 kDa) and a beta chain (145 kDa) which are disulfide linked. Binds PLXNB1. Interacts when phosphorylated with downstream effectors including STAT3, PIK3R1, SRC, PCLG1, GRB2 and GAB1. Interacts with SPSB1, SPSB2 and SPSB4. Interacts with INPP5D/SHIP1. When phosphorylated at Tyr-1357, interacts with INPPL1/SHIP2. Interacts with RANBP9 and RANBP10, as well as SPSB1, SPSB2, SPSB3 and SPSB4. SPSB1 binding occurs in the presence and in the absence of HGF, however HGF treatment has a positive effect on this interaction. Interacts with MUC20; prevents interaction with GRB2 and suppresses hepatocyte growth factor-induced cell proliferation. Interacts with GRB10. Interacts with PTPN1 and PTPN2. Interacts with HSP90AA1 and HSP90AB1; the interaction suppresses MET kinase activity. Interacts with tensin TNS3. Interacts (when phosphorylated) with tensin TNS4 (via SH2 domain); the interaction increases MET protein stability by inhibiting MET endocytosis and subsequent lysosomal degradation. In terms of processing, autophosphorylated in response to ligand binding on Tyr-1235 and Tyr-1236 in the kinase domain leading to further phosphorylation of Tyr-1350 and Tyr-1357 in the C-terminal multifunctional docking site. Dephosphorylated by PTPRJ at Tyr-1350 and Tyr-1366. Dephosphorylated by PTPN1 and PTPN2. Ubiquitinated. Ubiquitination by CBL regulates the receptor stability and activity through proteasomal degradation. Post-translationally, O-mannosylation of IPT/TIG domains by TMEM260 is required for protein maturation. O-mannosylated residues are composed of single mannose glycans that are not elongated or modified.

Its subcellular location is the membrane. The catalysed reaction is L-tyrosyl-[protein] + ATP = O-phospho-L-tyrosyl-[protein] + ADP + H(+). Its activity is regulated as follows. In its inactive state, the C-terminal tail interacts with the catalytic domain and inhibits the kinase activity. Upon ligand binding, the C-terminal tail is displaced and becomes phosphorylated, thus increasing the kinase activity. Receptor tyrosine kinase that transduces signals from the extracellular matrix into the cytoplasm by binding to hepatocyte growth factor/HGF ligand. Regulates many physiological processes including proliferation, scattering, morphogenesis and survival. Ligand binding at the cell surface induces autophosphorylation of MET on its intracellular domain that provides docking sites for downstream signaling molecules. Following activation by ligand, interacts with the PI3-kinase subunit PIK3R1, PLCG1, SRC, GRB2, STAT3 or the adapter GAB1. Recruitment of these downstream effectors by MET leads to the activation of several signaling cascades including the RAS-ERK, PI3 kinase-AKT, or PLCgamma-PKC. The RAS-ERK activation is associated with the morphogenetic effects while PI3K/AKT coordinates prosurvival effects. During embryonic development, MET signaling plays a role in gastrulation, development and migration of muscles and neuronal precursors, angiogenesis and kidney formation. In adults, participates in wound healing as well as organ regeneration and tissue remodeling. Also promotes differentiation and proliferation of hematopoietic cells. This Loxodonta africana (African elephant) protein is Hepatocyte growth factor receptor (MET).